The sequence spans 355 residues: Guanine nucleotide-binding protein G(o) subunit alpha (355 aa).

Residues 1–17 (MGCASSAEERAAPSAQQ) show a composition bias toward low complexity. Residues 1–24 (MGCASSAEERAAPSAQQADREKLK) form a disordered region. Gly2 carries the N-myristoyl glycine lipid modification. Residue Cys3 is the site of S-palmitoyl cysteine attachment. One can recognise a G-alpha domain in the interval 32-355 (KDIKLLLLGA…ANNLRGCGLY (324 aa)). The segment at 35 to 48 (KLLLLGAGESGKST) is G1 motif. Residues 40 to 47 (GAGESGKS), 176 to 182 (LRTRVKT), 201 to 205 (DVGRG), 201 to 206 (DVGRGQ), 271 to 274 (NKKD), and Ala327 contribute to the GTP site. Residues Ser47 and Thr182 each coordinate Mg(2+). The interval 174-182 (DILRTRVKT) is G2 motif. The tract at residues 197–206 (FKLFDVGRGQ) is G3 motif. Positions 267 to 274 (ILFLNKKD) are G4 motif. The G5 motif stretch occupies residues 326 to 330 (TATDT).

The protein belongs to the G-alpha family. G(i/o/t/z) subfamily. G proteins are composed of 3 units; alpha, beta and gamma. The alpha chain contains the guanine nucleotide binding site.

Functionally, guanine nucleotide-binding proteins (G proteins) are involved as modulators or transducers in various transmembrane signaling systems. The G(o) protein function is not clear. This is Guanine nucleotide-binding protein G(o) subunit alpha from Manduca sexta (Tobacco hawkmoth).